We begin with the raw amino-acid sequence, 415 residues long: Sucrose permease (415 aa).

Residues 1–16 are Cytoplasmic-facing; that stretch reads MALNIPFRNAYYRFAS. The chain crosses the membrane as a helical span at residues 17–37; sequence SYSFLFFISWSLWWSLYAIWL. At 38–48 the chain is on the periplasmic side; that stretch reads KGHLGLTGTEL. A helical transmembrane segment spans residues 49–69; that stretch reads GTLYSVNQFTSILFMMFYGIV. The Cytoplasmic portion of the chain corresponds to 70 to 77; sequence QDKLGLKK. A helical transmembrane segment spans residues 78 to 98; that stretch reads PLIWCMSFILVLTGPFMIYVY. Over 99-107 the chain is Periplasmic; the sequence is EPLLQSNFS. The chain crosses the membrane as a helical span at residues 108–128; the sequence is VGLILGALFFGLGYLAGCGLL. The Cytoplasmic segment spans residues 129 to 147; that stretch reads DSFTEKMARNFHFEYGTAR. A helical membrane pass occupies residues 148–167; that stretch reads AWGSFGYAIGAFFAGIFFSI. Topologically, residues 168–170 are periplasmic; it reads SPH. The helical transmembrane segment at 171–190 threads the bilayer; sequence INFWLVSLFGAVFMMINMRF. Over 191 to 220 the chain is Cytoplasmic; it reads KDKDHQCIAADAGGVKKEDFIAVFKDRNFW. A helical transmembrane segment spans residues 221-241; the sequence is VFVIFIVGTWSFYNIFDQQLF. Topologically, residues 242 to 260 are periplasmic; the sequence is PVFYAGLFESHDVGTRLYG. The helical transmembrane segment at 261–281 threads the bilayer; that stretch reads YLNSFQVVLEALCMAIIPFFV. Residues 282–287 are Cytoplasmic-facing; that stretch reads NRVGPK. The helical transmembrane segment at 288 to 308 threads the bilayer; the sequence is NALLIGVVIMALRILSCALFV. Over 309 to 311 the chain is Periplasmic; it reads NPW. Residues 312–332 form a helical membrane-spanning segment; the sequence is IISLVKLLHAIEVPLCVISVF. The Cytoplasmic portion of the chain corresponds to 333–342; the sequence is KYSVANFDKR. The chain crosses the membrane as a helical span at residues 343-363; that stretch reads LSSTIFLIGFQIASSLGIVLL. Residues 364-377 are Periplasmic-facing; sequence STPTGILFDHAGYQ. Residues 378–398 traverse the membrane as a helical segment; sequence TVFFAISGIVCLMLLFGIFFL. Residues 399 to 415 lie on the Cytoplasmic side of the membrane; it reads SKKREQIVMETPVPSAI.

This sequence belongs to the major facilitator superfamily. Oligosaccharide:H(+) symporter (OHS) (TC 2.A.1.5) family.

The protein localises to the cell inner membrane. It participates in glycan biosynthesis; sucrose metabolism. Functionally, responsible for transport of sucrose into the cell, with the concomitant import of a proton (symport system). Can also transport maltose, fructose or lactulose, but not glucose, lactose or melibiose. The substrate specificity is directed toward the fructofuranosyl moiety of the substrate. The polypeptide is Sucrose permease (Escherichia coli).